The primary structure comprises 469 residues: Argininosuccinate lyase (469 aa).

The protein belongs to the lyase 1 family. Argininosuccinate lyase subfamily.

The protein localises to the cytoplasm. It catalyses the reaction 2-(N(omega)-L-arginino)succinate = fumarate + L-arginine. The protein operates within amino-acid biosynthesis; L-arginine biosynthesis; L-arginine from L-ornithine and carbamoyl phosphate: step 3/3. The protein is Argininosuccinate lyase of Burkholderia cenocepacia (strain HI2424).